Consider the following 193-residue polypeptide: Adenylate kinase (193 aa).

11–16 (GSGKGT) lines the ATP pocket. Residues 31 to 60 (STGDIFRANVKGETPLGLEAKKYMDAGDYV) are NMP. AMP is bound by residues Thr32, Arg37, 58–60 (DYV), 86–89 (GYPR), and Gln93. Residues 127-137 (GRAKESGRSDD) form an LID region. ATP is bound at residue Arg128. AMP contacts are provided by Arg134 and Arg145. Gly173 contacts ATP.

The protein belongs to the adenylate kinase family. As to quaternary structure, monomer.

It localises to the cytoplasm. It catalyses the reaction AMP + ATP = 2 ADP. It functions in the pathway purine metabolism; AMP biosynthesis via salvage pathway; AMP from ADP: step 1/1. Catalyzes the reversible transfer of the terminal phosphate group between ATP and AMP. Plays an important role in cellular energy homeostasis and in adenine nucleotide metabolism. The sequence is that of Adenylate kinase from Renibacterium salmoninarum (strain ATCC 33209 / DSM 20767 / JCM 11484 / NBRC 15589 / NCIMB 2235).